Reading from the N-terminus, the 374-residue chain is Speckle-type POZ protein B (374 aa).

Positions 31 to 161 constitute an MATH domain; the sequence is KFSYMWTINN…DDKLTLFCEV (131 aa). A required for nuclear localization region spans residues 71–191; the sequence is VNPKGLDEES…PECRLSDELG (121 aa). The BTB domain occupies 173 to 297; it reads QNTMNMVKVP…MCEEALCSNL (125 aa). The homodimerization stretch occupies residues 297–355; that stretch reads LSVENAAEILILADLHSADQLKTQAVDFINYHASDVMETSGWKSMVVSHPHLVAEAYRS.

It belongs to the Tdpoz family. In terms of assembly, homodimer. Part of cullin-RING-based BCR (BTB-CUL3-RBX1) E3 ubiquitin-protein ligase complexes that contain CUL3 and SPOP, plus a target protein.

Its subcellular location is the nucleus. The protein localises to the nucleus speckle. Its pathway is protein modification; protein ubiquitination. Component of a cullin-RING-based BCR (BTB-CUL3-RBX1) E3 ubiquitin-protein ligase complex that mediates the ubiquitination of target proteins, leading most often to their proteasomal degradation. This is Speckle-type POZ protein B (spop-b) from Xenopus laevis (African clawed frog).